The primary structure comprises 439 residues: Serine hydroxymethyltransferase (439 aa).

Residues Leu-134 and 138 to 140 (GHL) each bind (6S)-5,6,7,8-tetrahydrofolate. Residue Lys-243 is modified to N6-(pyridoxal phosphate)lysine.

The protein belongs to the SHMT family. Homodimer. The cofactor is pyridoxal 5'-phosphate.

The protein resides in the cytoplasm. The catalysed reaction is (6R)-5,10-methylene-5,6,7,8-tetrahydrofolate + glycine + H2O = (6S)-5,6,7,8-tetrahydrofolate + L-serine. It participates in one-carbon metabolism; tetrahydrofolate interconversion. The protein operates within amino-acid biosynthesis; glycine biosynthesis; glycine from L-serine: step 1/1. Catalyzes the reversible interconversion of serine and glycine with tetrahydrofolate (THF) serving as the one-carbon carrier. This reaction serves as the major source of one-carbon groups required for the biosynthesis of purines, thymidylate, methionine, and other important biomolecules. Also exhibits THF-independent aldolase activity toward beta-hydroxyamino acids, producing glycine and aldehydes, via a retro-aldol mechanism. The sequence is that of Serine hydroxymethyltransferase from Brucella anthropi (strain ATCC 49188 / DSM 6882 / CCUG 24695 / JCM 21032 / LMG 3331 / NBRC 15819 / NCTC 12168 / Alc 37) (Ochrobactrum anthropi).